A 378-amino-acid polypeptide reads, in one-letter code: Beta sliding clamp (378 aa).

It belongs to the beta sliding clamp family. As to quaternary structure, forms a ring-shaped head-to-tail homodimer around DNA which binds and tethers DNA polymerases and other proteins to the DNA. The DNA replisome complex has a single clamp-loading complex (3 tau and 1 each of delta, delta', psi and chi subunits) which binds 3 Pol III cores (1 core on the leading strand and 2 on the lagging strand) each with a beta sliding clamp dimer. Additional proteins in the replisome are other copies of gamma, psi and chi, Ssb, DNA helicase and RNA primase.

Its subcellular location is the cytoplasm. Its function is as follows. Confers DNA tethering and processivity to DNA polymerases and other proteins. Acts as a clamp, forming a ring around DNA (a reaction catalyzed by the clamp-loading complex) which diffuses in an ATP-independent manner freely and bidirectionally along dsDNA. Initially characterized for its ability to contact the catalytic subunit of DNA polymerase III (Pol III), a complex, multichain enzyme responsible for most of the replicative synthesis in bacteria; Pol III exhibits 3'-5' exonuclease proofreading activity. The beta chain is required for initiation of replication as well as for processivity of DNA replication. The polypeptide is Beta sliding clamp (dnaN) (Streptococcus pneumoniae serotype 4 (strain ATCC BAA-334 / TIGR4)).